A 488-amino-acid chain; its full sequence is Metalloreductase STEAP3 (488 aa).

Residues 1–207 (MSGEMDKPLI…AREVEAIPLR (207 aa)) lie on the Cytoplasmic side of the membrane. Residues S11, S17, and S20 each carry the phosphoserine modification. Residues 36-39 (SGDF), 58-59 (SR), 91-98 (VFREHYSS), N116, and A151 contribute to the NADP(+) site. Residues W152 and D160 each contribute to the FAD site. The helical transmembrane segment at 208–228 (LLPSWKVPTLLALGLFVCFYA) threads the bilayer. Residue Y229 participates in Fe(3+) binding. Residues 229–258 (YNFIRDVLQPYIRKDENKFYKMPLSVVNTT) lie on the Vesicular side of the membrane. An N-linked (GlcNAc...) asparagine glycan is attached at N256. Residues 259-279 (LPCVAYVLLSLVYLPGVLAAA) traverse the membrane as a helical segment. One can recognise a Ferric oxidoreductase domain in the interval 259–407 (LPCVAYVLLS…LGFVALMLST (149 aa)). Topologically, residues 280–304 (LQLRRGTKYQRFPDWLDHWLQHRKQ) are cytoplasmic. Positions 281, 302, and 303 each coordinate FAD. A helical transmembrane segment spans residues 305 to 325 (IGLLSFFFAMLHALYSFCLPL). H316 is a binding site for heme b. Y319 contacts Fe(3+). Topologically, residues 326–358 (RRSHRYDLVNLAVKQVLANKSRLWVEEEVWRME) are vesicular. A helical membrane pass occupies residues 359–379 (IYLSLGVLALGMLSLLAVTSI). FAD is bound at residue S378. Topologically, residues 380-390 (PSIANSLNWKE) are cytoplasmic. Residues 391–411 (FSFVQSTLGFVALMLSTMHTL) traverse the membrane as a helical segment. Q395 lines the FAD pocket. H409 provides a ligand contact to heme b. At 412 to 433 (TYGWTRAFEENHYKFYLPPTFT) the chain is on the vesicular side. A helical transmembrane segment spans residues 434-454 (LTLLLPCVIILAKGLFLLPCL). At 455 to 488 (SHRLTKIRRGWERDGAVKFMLPAGHTQGEKTSHV) the chain is on the cytoplasmic side. S486 is modified (phosphoserine).

Belongs to the STEAP family. In terms of assembly, homodimer. Interacts with BNIP3L, MYT1, RHBDL4/RHBDD1 and TCTP. The cofactor is FAD. Heme b is required as a cofactor. Post-translationally, proteolytically cleaved by RHBDL4/RHBDD1. RHBDL4/RHBDD1-induced cleavage occurs at multiple sites in a glycosylation-independent manner. In terms of processing, glycosylated.

It localises to the endosome membrane. It catalyses the reaction 2 Fe(2+) + NADP(+) + H(+) = 2 Fe(3+) + NADPH. It carries out the reaction 2 Cu(+) + NADP(+) + H(+) = 2 Cu(2+) + NADPH. Functionally, integral membrane protein that functions as a NADPH-dependent ferric-chelate reductase, using NADPH from one side of the membrane to reduce a Fe(3+) chelate that is bound on the other side of the membrane. Mediates sequential transmembrane electron transfer from NADPH to FAD and onto heme, and finally to the Fe(3+) chelate. Can also reduce Cu(2+) to Cu(1+). Mediates efficient transferrin-dependent iron uptake in erythroid cells. May play a role downstream of p53/TP53 to interface apoptosis and cell cycle progression. Indirectly involved in exosome secretion by facilitating the secretion of proteins such as TCTP. The polypeptide is Metalloreductase STEAP3 (Steap3) (Rattus norvegicus (Rat)).